Consider the following 114-residue polypeptide: Cuticle protein CP1158 (114 aa).

Pyrrolidone carboxylic acid is present on Q1. A run of 4 repeats spans residues 1–17 (QVGY…NIQF), 26–43 (VLKG…NLQL), 70–87 (SVVG…VQFS), and 95–112 (VLVG…NLQL).

In terms of tissue distribution, calcified shell.

The sequence is that of Cuticle protein CP1158 from Cancer pagurus (Rock crab).